Here is a 304-residue protein sequence, read N- to C-terminus: tRNA (guanine(9)-N1)-methyltransferase (304 aa).

Basic and acidic residues-rich tracts occupy residues 1-26 and 42-72; these read MENK…KNET and RQQE…KRKI. The disordered stretch occupies residues 1-72; sequence MENKDALDIG…LRKEERKRKI (72 aa). Residues 81–276 form the SAM-dependent MTase TRM10-type domain; the sequence is QKKRIRLGKV…EVIPKRKGIL (196 aa). S-adenosyl-L-methionine contacts are provided by residues Leu-183, Gly-203, 207-211, Cys-215, Leu-229, and 241-243; these read DKNRY and KIL. Asp-207 serves as the catalytic Proton acceptor. The segment at 282–304 is disordered; it reads SFDVSEDTRSQSNQSDSELEKEN. The residue at position 296 (Ser-296) is a Phosphoserine.

This sequence belongs to the class IV-like SAM-binding methyltransferase superfamily. TRM10 family. As to quaternary structure, monomer.

It localises to the cytoplasm. Its subcellular location is the nucleus. It carries out the reaction guanosine(9) in tRNA + S-adenosyl-L-methionine = N(1)-methylguanosine(9) in tRNA + S-adenosyl-L-homocysteine + H(+). In terms of biological role, S-adenosyl-L-methionine-dependent guanine N(1)-methyltransferase that catalyzes the formation of N(1)-methylguanine at position 9 (m1G9) in cytoplasmic tRNA. The polypeptide is tRNA (guanine(9)-N1)-methyltransferase (Schizosaccharomyces pombe (strain 972 / ATCC 24843) (Fission yeast)).